The primary structure comprises 2282 residues: Protein Ycf2 (2282 aa).

1635–1642 (GSIGTGRS) serves as a coordination point for ATP.

Belongs to the Ycf2 family.

The protein localises to the plastid. It is found in the chloroplast stroma. Probable ATPase of unknown function. Its presence in a non-photosynthetic plant (Epifagus virginiana) and experiments in tobacco indicate that it has an essential function which is probably not related to photosynthesis. This is Protein Ycf2 from Populus alba (White poplar).